Consider the following 257-residue polypeptide: uncharacterized protein (257 aa).

This is an uncharacterized protein from Bacillus subtilis (strain 168).